The chain runs to 428 residues: Delta-aminolevulinic acid dehydratase, chloroplastic (428 aa).

The active-site Schiff-base intermediate with substrate is the Lys-294. The 5-aminolevulinate site is built by Arg-304 and Lys-316. Glu-332 provides a ligand contact to Mg(2+). Lys-347 acts as the Schiff-base intermediate with substrate in catalysis. Residues Ser-373 and Tyr-412 each coordinate 5-aminolevulinate.

The protein belongs to the ALAD family. Homooctamer. Requires Mg(2+) as cofactor.

The protein localises to the plastid. Its subcellular location is the chloroplast. The enzyme catalyses 2 5-aminolevulinate = porphobilinogen + 2 H2O + H(+). It participates in porphyrin-containing compound metabolism; protoporphyrin-IX biosynthesis; coproporphyrinogen-III from 5-aminolevulinate: step 1/4. Its function is as follows. Catalyzes an early step in the biosynthesis of tetrapyrroles. Binds two molecules of 5-aminolevulinate per subunit, each at a distinct site, and catalyzes their condensation to form porphobilinogen. This Hordeum vulgare (Barley) protein is Delta-aminolevulinic acid dehydratase, chloroplastic (HEMB).